We begin with the raw amino-acid sequence, 508 residues long: Immunoglobulin G-binding protein A (508 aa).

Positions 1 to 36 (MKKKNIYSIRKLGVGIASVTLGTLLISGGVTPAANA) are cleaved as a signal peptide. The YSIRK-G/S signaling motif signature appears at 7–18 (YSIRKLGVGIAS). The stretch at 37-92 (AQHDEAQQNAFYQVLNMPNLNADQRNGFIQSLKDDPSQSANVLGEAQKLNDSQAPK) is one Immunoglobulin-binding region E repeat. The Immunoglobulin-binding region D repeat unit spans residues 93 to 153 (ADAQQNKFNK…KKLNESQAPK (61 aa)). An Immunoglobulin-binding region A repeat occupies 154-211 (ADNNFNKEQQNAFYEILNMPNLNEEQRNGFIQSLKDDPSQSANLLAEAKKLNESQAPK). One copy of the Immunoglobulin-binding region B repeat lies at 212-269 (ADNKFNKEQQNAFYEILHLPNLNEEQRNGFIQSLKDDPSQSANLLAEAKKLNDAQAPK). Residues 270–327 (ADNKFNKEQQNAFYEILHLPNLTEEQRNGFIQSLKDDPSVSKEILAEAKKLNDAQAPK) form an Immunoglobulin-binding region C repeat. The segment covering 318–412 (KKLNDAQAPK…GNKPGKEDGN (95 aa)) has biased composition (basic and acidic residues). Disordered stretches follow at residues 318–424 (KKLN…DTVN) and 459–479 (KKQPANHADANKAQALPETGE). 12 tandem repeats follow at residues 333–340 (KPGKEDGN), 341–348 (KPGKEDGN), 349–356 (KPGKEDNK), 357–364 (KPGKEDGN), 365–372 (KPGKEDNK), 373–380 (KPGKEDGN), 381–388 (KPGKEDGN), 389–396 (KPGKEDGN), 397–405 (KPGKEDGNK), 406–413 (PGKEDGNG), 414–421 (VHVVKPGD), and 422–429 (TVNDIAKA). Residues 333–408 (KPGKEDGNKP…GKEDGNKPGK (76 aa)) are 12 X 8 AA approximate tandem repeats. Positions 413 to 457 (GVHVVKPGDTVNDIAKANGTTADKIAADNKLADKNMIKPGQELVV) constitute a LysM domain. The short motif at 474–478 (LPETG) is the LPXTG sorting signal element. Position 477 is a pentaglycyl murein peptidoglycan amidated threonine (T477). A propeptide spans 478–508 (GEENPFIGTTVFGGLSLALGAALLAGRRREL) (removed by sortase).

It belongs to the immunoglobulin-binding protein SpA family. As to quaternary structure, interacts with host TNFRSF1A; this interaction leads to the stimulation of both surface expression and shedding of TNFRSF1A.

It localises to the secreted. The protein localises to the cell wall. Functionally, plays a role in the inhibition of the host innate and adaptive immune responses. Possesses five immunoglobulin-binding domains that capture both the fragment crystallizable region (Fc region) and the Fab region (part of Ig that identifies antigen) of immunoglobulins. In turn, Staphylococcus aureus is protected from phagocytic killing via inhibition of Ig Fc region. In addition, the host elicited B-cell response is prevented due to a decrease of antibody-secreting cell proliferation that enter the bone marrow, thereby decreasing long-term antibody production. Inhibits osteogenesis by preventing osteoblast proliferation and expression of alkaline phosphatase, type I collagen, osteopontin and osteocalcin. Acts directly as a pro-inflammatory factor in the lung through its ability to bind and activate tumor necrosis factor alpha receptor 1/TNFRSF1A. In Staphylococcus aureus, this protein is Immunoglobulin G-binding protein A (spa).